We begin with the raw amino-acid sequence, 194 residues long: Large ribosomal subunit protein eL15 (194 aa).

Residues 158-194 (ANRGLTSAGKKGRGLMYKGKGAEKARPGVRANGKKTK) form a disordered region.

It belongs to the eukaryotic ribosomal protein eL15 family.

The protein is Large ribosomal subunit protein eL15 of Methanococcus maripaludis (strain DSM 14266 / JCM 13030 / NBRC 101832 / S2 / LL).